The chain runs to 248 residues: 2,3-bisphosphoglycerate-dependent phosphoglycerate mutase (248 aa).

Substrate is bound by residues 10 to 17 (RHGQSQWN), 23 to 24 (TG), arginine 62, 89 to 92 (ERHY), lysine 100, 116 to 117 (RR), and 183 to 184 (GN). Catalysis depends on histidine 11, which acts as the Tele-phosphohistidine intermediate. Catalysis depends on glutamate 89, which acts as the Proton donor/acceptor.

The protein belongs to the phosphoglycerate mutase family. BPG-dependent PGAM subfamily.

The catalysed reaction is (2R)-2-phosphoglycerate = (2R)-3-phosphoglycerate. The protein operates within carbohydrate degradation; glycolysis; pyruvate from D-glyceraldehyde 3-phosphate: step 3/5. Its function is as follows. Catalyzes the interconversion of 2-phosphoglycerate and 3-phosphoglycerate. The chain is 2,3-bisphosphoglycerate-dependent phosphoglycerate mutase from Corynebacterium kroppenstedtii (strain DSM 44385 / JCM 11950 / CIP 105744 / CCUG 35717).